The sequence spans 453 residues: Jacalin-related lectin 40 (453 aa).

3 consecutive Jacalin-type lectin domains span residues M1–T142, H154–S296, and P306–P449. At A2 the chain carries N-acetylalanine.

The protein belongs to the jacalin lectin family. Expressed in roots.

This is Jacalin-related lectin 40 (JAL40) from Arabidopsis thaliana (Mouse-ear cress).